Consider the following 227-residue polypeptide: Octanoyltransferase (227 aa).

The BPL/LPL catalytic domain occupies 31-209; the sequence is ANTIDEIWLV…VFLSLLGGTN (179 aa). Residues 71–78, 139–141, and 152–154 contribute to the substrate site; these read RGGKITYH, SIG, and GLA. Cys-170 serves as the catalytic Acyl-thioester intermediate.

This sequence belongs to the LipB family.

It localises to the cytoplasm. The catalysed reaction is octanoyl-[ACP] + L-lysyl-[protein] = N(6)-octanoyl-L-lysyl-[protein] + holo-[ACP] + H(+). The protein operates within protein modification; protein lipoylation via endogenous pathway; protein N(6)-(lipoyl)lysine from octanoyl-[acyl-carrier-protein]: step 1/2. Catalyzes the transfer of endogenously produced octanoic acid from octanoyl-acyl-carrier-protein onto the lipoyl domains of lipoate-dependent enzymes. Lipoyl-ACP can also act as a substrate although octanoyl-ACP is likely to be the physiological substrate. This is Octanoyltransferase from Baumannia cicadellinicola subsp. Homalodisca coagulata.